The sequence spans 364 residues: MKVLIAGGGTGGHINPGLAIAKYIKQKEAEADITFVGTKKGLETKLVPREGYPLETITVRGFKRKLSLDTLIAIKELIQSFFQASRLLKRIKPDVVIGTGGYVCGPVLYMAAKKGIPTLIHESNAFPGVTNRLLERYVSYVAISFKDAEKYFKNKKKLVLTGNPVREELLNSGRDKVASNLGIVEGKPLIVAMGGSRGARRINETIADMLNNYFKGEFNLIFATGEAQFDDISSTVKIDEKYRDMVKVVPYIYNVDQVYVASDLMICRAGAITISELQVMGIPSILIPSPYVTANHQEHNARSLERDGGAVVILENELNADLLYKQICSLIFNKDVLKKMSKNTSKNRVTDSAEKIYHLIKEII.

UDP-N-acetyl-alpha-D-glucosamine-binding positions include 10-12 (TGG), Asn-124, Arg-166, Ser-196, Ile-252, and Gln-297.

It belongs to the glycosyltransferase 28 family. MurG subfamily.

It localises to the cell membrane. It catalyses the reaction di-trans,octa-cis-undecaprenyl diphospho-N-acetyl-alpha-D-muramoyl-L-alanyl-D-glutamyl-meso-2,6-diaminopimeloyl-D-alanyl-D-alanine + UDP-N-acetyl-alpha-D-glucosamine = di-trans,octa-cis-undecaprenyl diphospho-[N-acetyl-alpha-D-glucosaminyl-(1-&gt;4)]-N-acetyl-alpha-D-muramoyl-L-alanyl-D-glutamyl-meso-2,6-diaminopimeloyl-D-alanyl-D-alanine + UDP + H(+). It functions in the pathway cell wall biogenesis; peptidoglycan biosynthesis. In terms of biological role, cell wall formation. Catalyzes the transfer of a GlcNAc subunit on undecaprenyl-pyrophosphoryl-MurNAc-pentapeptide (lipid intermediate I) to form undecaprenyl-pyrophosphoryl-MurNAc-(pentapeptide)GlcNAc (lipid intermediate II). The chain is UDP-N-acetylglucosamine--N-acetylmuramyl-(pentapeptide) pyrophosphoryl-undecaprenol N-acetylglucosamine transferase from Ruminiclostridium cellulolyticum (strain ATCC 35319 / DSM 5812 / JCM 6584 / H10) (Clostridium cellulolyticum).